A 135-amino-acid chain; its full sequence is Large ribosomal subunit protein uL16c (135 aa).

Residues 1 to 17 (MLSPKRTRFRKQHRGRM) are compositionally biased toward basic residues. The interval 1–21 (MLSPKRTRFRKQHRGRMKGVS) is disordered.

The protein belongs to the universal ribosomal protein uL16 family. Part of the 50S ribosomal subunit.

It localises to the plastid. It is found in the chloroplast. This chain is Large ribosomal subunit protein uL16c, found in Amborella trichopoda.